The chain runs to 322 residues: Replication factor C small subunit (322 aa).

46 to 53 lines the ATP pocket; the sequence is GSAGIGKT.

This sequence belongs to the activator 1 small subunits family. RfcS subfamily. As to quaternary structure, heteromultimer composed of small subunits (RfcS) and large subunits (RfcL).

Its function is as follows. Part of the RFC clamp loader complex which loads the PCNA sliding clamp onto DNA. This chain is Replication factor C small subunit, found in Methanoculleus marisnigri (strain ATCC 35101 / DSM 1498 / JR1).